The chain runs to 94 residues: Large ribosomal subunit protein bL25 (94 aa).

It belongs to the bacterial ribosomal protein bL25 family. As to quaternary structure, part of the 50S ribosomal subunit; part of the 5S rRNA/L5/L18/L25 subcomplex. Contacts the 5S rRNA. Binds to the 5S rRNA independently of L5 and L18.

This is one of the proteins that binds to the 5S RNA in the ribosome where it forms part of the central protuberance. The chain is Large ribosomal subunit protein bL25 from Shigella boydii serotype 4 (strain Sb227).